Consider the following 132-residue polypeptide: Large-conductance mechanosensitive channel (132 aa).

Transmembrane regions (helical) follow at residues 8–28 (FALK…GAFG), 30–50 (IVSS…LGGV), and 67–87 (GAFI…FLFI).

This sequence belongs to the MscL family. Homopentamer.

Its subcellular location is the cell membrane. Channel that opens in response to stretch forces in the membrane lipid bilayer. May participate in the regulation of osmotic pressure changes within the cell. The protein is Large-conductance mechanosensitive channel of Bacillus cytotoxicus (strain DSM 22905 / CIP 110041 / 391-98 / NVH 391-98).